The primary structure comprises 503 residues: Hemogen (503 aa).

Basic residues-rich tracts occupy residues 1-10 (MDMGKGRPRL) and 61-79 (KKRK…RKRQ). Positions 1-129 (MDMGKGRPRL…PLVPSPTKAV (129 aa)) are disordered. The necessary for nuclear localization stretch occupies residues 7–87 (RPRLKLPQMP…RQGNVEQKAE (81 aa)). A phosphoserine mark is found at serine 90, serine 103, serine 124, serine 153, serine 158, serine 171, serine 213, serine 223, serine 228, serine 241, and serine 269. Position 286 is a phosphothreonine (threonine 286). Residues 381-503 (QKTIQESPEP…ENGIYSSALF (123 aa)) form a disordered region. The span at 385 to 396 (QESPEPEQYSPE) shows a compositional bias: low complexity. 2 positions are modified to phosphoserine: serine 387 and serine 394. A compositionally biased stretch (basic and acidic residues) spans 426 to 436 (CQDREEPKHSL).

In terms of tissue distribution, expressed in hematopoietic precursor cells. Highly expressed in bone marrow, the red pulp of the spleen and round spermatids. Weakly expressed in peripheral blood cells.

The protein resides in the nucleus. Regulates the proliferation and differentiation of hematopoietic cells. Overexpression block the TPA-induced megakaryocytic differentiation in the K562 cell model. May also prevent cell apoptosis through the activation of the nuclear factor-kappa B (NF-kB). This is Hemogen (Hemgn) from Mus musculus (Mouse).